A 510-amino-acid polypeptide reads, in one-letter code: NAD(P)H-quinone oxidoreductase subunit 2 B, chloroplastic (510 aa).

The next 13 membrane-spanning stretches (helical) occupy residues 24–44 (LLLFDGSFIFPECILIFGLIL), 57–77 (ISWFYFISSTSLVMSIVVLLF), 99–119 (IFQFLILLSSTLCIPLSVEYI), 124–144 (MAITEFLLFVLTATLGGMFLC), 149–169 (LITIFVAPECFSLCSYLLSGY), 183–203 (YLLMGGASSSILVHGFSWLYG), 227–247 (PGISIALIFITVGIGFKLSLA), 295–315 (WHLLLEILAILSMILGNLIAI), 323–343 (MLAYSSIGQIGYVIIGIIVGD), 354–374 (YMLFYISMNLGTFACIVSFGL), 395–415 (ALSLALCLLSLGGLPPLAGFF), 418–438 (LYLFWCGWQAGLYFLVSIGLL), and 482–502 (LSMIVCVIASTISGISMNPII).

Belongs to the complex I subunit 2 family. NDH is composed of at least 16 different subunits, 5 of which are encoded in the nucleus.

It localises to the plastid. It is found in the chloroplast thylakoid membrane. It catalyses the reaction a plastoquinone + NADH + (n+1) H(+)(in) = a plastoquinol + NAD(+) + n H(+)(out). It carries out the reaction a plastoquinone + NADPH + (n+1) H(+)(in) = a plastoquinol + NADP(+) + n H(+)(out). Its function is as follows. NDH shuttles electrons from NAD(P)H:plastoquinone, via FMN and iron-sulfur (Fe-S) centers, to quinones in the photosynthetic chain and possibly in a chloroplast respiratory chain. The immediate electron acceptor for the enzyme in this species is believed to be plastoquinone. Couples the redox reaction to proton translocation, and thus conserves the redox energy in a proton gradient. This is NAD(P)H-quinone oxidoreductase subunit 2 B, chloroplastic from Lotus japonicus (Lotus corniculatus var. japonicus).